Consider the following 309-residue polypeptide: Protein FdhE (309 aa).

Belongs to the FdhE family.

The protein localises to the cytoplasm. Functionally, necessary for formate dehydrogenase activity. This Shigella boydii serotype 18 (strain CDC 3083-94 / BS512) protein is Protein FdhE.